A 265-amino-acid chain; its full sequence is Protein N-terminal and lysine N-methyltransferase EFM7 (265 aa).

Residues W55, 81–83 (GAA), D103, W141, and A169 each bind S-adenosyl-L-methionine.

The protein belongs to the class I-like SAM-binding methyltransferase superfamily. EFM7 family.

The protein resides in the cytoplasm. S-adenosyl-L-methionine-dependent protein methyltransferase that trimethylates the N-terminal glycine 'Gly-2' of elongation factor 1-alpha, before also catalyzing the mono- and dimethylation of 'Lys-3'. In Gibberella zeae (strain ATCC MYA-4620 / CBS 123657 / FGSC 9075 / NRRL 31084 / PH-1) (Wheat head blight fungus), this protein is Protein N-terminal and lysine N-methyltransferase EFM7.